We begin with the raw amino-acid sequence, 105 residues long: Urease subunit gamma (105 aa).

It belongs to the urease gamma subunit family. In terms of assembly, heterotrimer of UreA (gamma), UreB (beta) and UreC (alpha) subunits. Three heterotrimers associate to form the active enzyme.

The protein resides in the cytoplasm. It catalyses the reaction urea + 2 H2O + H(+) = hydrogencarbonate + 2 NH4(+). Its pathway is nitrogen metabolism; urea degradation; CO(2) and NH(3) from urea (urease route): step 1/1. This is Urease subunit gamma from Bacillus subtilis (strain 168).